Reading from the N-terminus, the 298-residue chain is Pyruvate synthase subunit PorB (298 aa).

[4Fe-4S] cluster is bound by residues C19, C22, C47, and C218.

In terms of assembly, heterotetramer of one alpha, one beta, one delta and one gamma chain. The cofactor is [4Fe-4S] cluster.

It carries out the reaction 2 oxidized [2Fe-2S]-[ferredoxin] + pyruvate + CoA = 2 reduced [2Fe-2S]-[ferredoxin] + acetyl-CoA + CO2 + H(+). This is Pyruvate synthase subunit PorB (porB) from Methanocaldococcus jannaschii (strain ATCC 43067 / DSM 2661 / JAL-1 / JCM 10045 / NBRC 100440) (Methanococcus jannaschii).